The following is a 241-amino-acid chain: LexA repressor (241 aa).

The H-T-H motif DNA-binding region spans 41 to 61 (FREIGNAAGLKSPSSVKHQLQ). Active-site for autocatalytic cleavage activity residues include Ser165 and Lys202.

The protein belongs to the peptidase S24 family. In terms of assembly, homodimer.

The enzyme catalyses Hydrolysis of Ala-|-Gly bond in repressor LexA.. Its function is as follows. Represses a number of genes involved in the response to DNA damage (SOS response), including recA and lexA. In the presence of single-stranded DNA, RecA interacts with LexA causing an autocatalytic cleavage which disrupts the DNA-binding part of LexA, leading to derepression of the SOS regulon and eventually DNA repair. The polypeptide is LexA repressor (Bifidobacterium longum (strain DJO10A)).